The following is a 76-amino-acid chain: Conotoxin Vc6.9 (76 aa).

The N-terminal stretch at 1–19 (MEKLTILLLVAAVLMSTQA) is a signal peptide. Positions 20–41 (LMQEQRQKAKINLFSKRKPSAE) are excised as a propeptide. 3 disulfide bridges follow: Cys-49/Cys-63, Cys-56/Cys-67, and Cys-62/Cys-72.

The protein belongs to the conotoxin O2 superfamily. Expressed by the venom duct.

It is found in the secreted. In terms of biological role, inhibits voltage-gated ion channels. In Conus victoriae (Queen Victoria cone), this protein is Conotoxin Vc6.9.